The chain runs to 81 residues: Photosystem I iron-sulfur center (81 aa).

4Fe-4S ferredoxin-type domains follow at residues 2 to 31 (SHSVKIYDTCIGCTHCVRACPTDVLEMIPW) and 39 to 68 (IASAPRTEDCVGCKRCESACPTDFLSVRVY). The [4Fe-4S] cluster site is built by cysteine 11, cysteine 14, cysteine 17, cysteine 21, cysteine 48, cysteine 51, cysteine 54, and cysteine 58.

The eukaryotic PSI reaction center is composed of at least 11 subunits. [4Fe-4S] cluster is required as a cofactor.

Its subcellular location is the plastid. It is found in the chloroplast thylakoid membrane. It catalyses the reaction reduced [plastocyanin] + hnu + oxidized [2Fe-2S]-[ferredoxin] = oxidized [plastocyanin] + reduced [2Fe-2S]-[ferredoxin]. Apoprotein for the two 4Fe-4S centers FA and FB of photosystem I (PSI); essential for photochemical activity. FB is the terminal electron acceptor of PSI, donating electrons to ferredoxin. The C-terminus interacts with PsaA/B/D and helps assemble the protein into the PSI complex. Required for binding of PsaD and PsaE to PSI. PSI is a plastocyanin-ferredoxin oxidoreductase, converting photonic excitation into a charge separation, which transfers an electron from the donor P700 chlorophyll pair to the spectroscopically characterized acceptors A0, A1, FX, FA and FB in turn. The chain is Photosystem I iron-sulfur center from Zea mays (Maize).